The sequence spans 104 residues: Large ribosomal subunit protein uL24 (104 aa).

The protein belongs to the universal ribosomal protein uL24 family. As to quaternary structure, part of the 50S ribosomal subunit.

Functionally, one of two assembly initiator proteins, it binds directly to the 5'-end of the 23S rRNA, where it nucleates assembly of the 50S subunit. Its function is as follows. One of the proteins that surrounds the polypeptide exit tunnel on the outside of the subunit. In Pseudoalteromonas translucida (strain TAC 125), this protein is Large ribosomal subunit protein uL24.